The chain runs to 158 residues: Cyclic pyranopterin monophosphate synthase (158 aa).

Residues 75-77 (LCH) and 113-114 (ME) each bind substrate. D128 is an active-site residue.

This sequence belongs to the MoaC family. In terms of assembly, homohexamer; trimer of dimers.

The catalysed reaction is (8S)-3',8-cyclo-7,8-dihydroguanosine 5'-triphosphate = cyclic pyranopterin phosphate + diphosphate. The protein operates within cofactor biosynthesis; molybdopterin biosynthesis. Functionally, catalyzes the conversion of (8S)-3',8-cyclo-7,8-dihydroguanosine 5'-triphosphate to cyclic pyranopterin monophosphate (cPMP). This chain is Cyclic pyranopterin monophosphate synthase, found in Histophilus somni (strain 129Pt) (Haemophilus somnus).